Reading from the N-terminus, the 633-residue chain is DNA-directed RNA polymerase subunit beta' (633 aa).

The Zn(2+) site is built by C72, C74, C87, and C90. Mg(2+)-binding residues include D468, D470, and D472.

Belongs to the RNA polymerase beta' chain family. RpoC1 subfamily. As to quaternary structure, in plastids the minimal PEP RNA polymerase catalytic core is composed of four subunits: alpha, beta, beta', and beta''. When a (nuclear-encoded) sigma factor is associated with the core the holoenzyme is formed, which can initiate transcription. Requires Mg(2+) as cofactor. Zn(2+) serves as cofactor.

The protein resides in the plastid. It localises to the chloroplast. It catalyses the reaction RNA(n) + a ribonucleoside 5'-triphosphate = RNA(n+1) + diphosphate. DNA-dependent RNA polymerase catalyzes the transcription of DNA into RNA using the four ribonucleoside triphosphates as substrates. This chain is DNA-directed RNA polymerase subunit beta', found in Cyanidium caldarium (Red alga).